The sequence spans 671 residues: DNA ligase (671 aa).

Residues 32–36 (DAEYD), 81–82 (SL), and Glu113 contribute to the NAD(+) site. The N6-AMP-lysine intermediate role is filled by Lys115. NAD(+) contacts are provided by Arg136, Glu173, Lys290, and Lys314. Cys408, Cys411, Cys426, and Cys432 together coordinate Zn(2+). A BRCT domain is found at 593-671 (EIDSPFAGKT…EAEMIRLLGA (79 aa)).

It belongs to the NAD-dependent DNA ligase family. LigA subfamily. It depends on Mg(2+) as a cofactor. Mn(2+) serves as cofactor.

The catalysed reaction is NAD(+) + (deoxyribonucleotide)n-3'-hydroxyl + 5'-phospho-(deoxyribonucleotide)m = (deoxyribonucleotide)n+m + AMP + beta-nicotinamide D-nucleotide.. Functionally, DNA ligase that catalyzes the formation of phosphodiester linkages between 5'-phosphoryl and 3'-hydroxyl groups in double-stranded DNA using NAD as a coenzyme and as the energy source for the reaction. It is essential for DNA replication and repair of damaged DNA. This is DNA ligase from Salmonella dublin (strain CT_02021853).